Reading from the N-terminus, the 271-residue chain is ATP synthase subunit a (271 aa).

The next 5 helical transmembrane spans lie at 40-60 (TINI…LVLF), 100-120 (LIAP…LMDL), 146-166 (DVNV…FYSI), 220-240 (LIFI…LNVP), and 242-262 (AIFH…LTIV).

It belongs to the ATPase A chain family. As to quaternary structure, F-type ATPases have 2 components, CF(1) - the catalytic core - and CF(0) - the membrane proton channel. CF(1) has five subunits: alpha(3), beta(3), gamma(1), delta(1), epsilon(1). CF(0) has three main subunits: a(1), b(2) and c(9-12). The alpha and beta chains form an alternating ring which encloses part of the gamma chain. CF(1) is attached to CF(0) by a central stalk formed by the gamma and epsilon chains, while a peripheral stalk is formed by the delta and b chains.

The protein resides in the cell inner membrane. In terms of biological role, key component of the proton channel; it plays a direct role in the translocation of protons across the membrane. The protein is ATP synthase subunit a of Escherichia coli O8 (strain IAI1).